A 262-amino-acid chain; its full sequence is KTSTRTRCAFEVAARDQGAGATYLEPSASQIGHKESIKDTARVLGRMYDAIEYRGFGQEIVEELAKYAGVPVFNGLTNEFHPTQMLADALTMREHSSKPLNQTAFAYVGDARYNMGNSLLILGAKLGMDVRIGAPESLWPSEGIIAAAHAAAKETGAKITLTENAHEAVKGVGFIHTDVWVSMGEPKEVWQERIDLLKDYRVTPELMAASGNPQVKFMHCLPAFHNRETKVGEWIYETFGLNGVEVTEEVFESPASIVFDQA.

Carbamoyl phosphate-binding positions include 3–7, Q30, R54, and 81–84; these read STRTR and HPTQ. L-ornithine contacts are provided by residues N114, D178, and 182 to 183; that span reads SM. Carbamoyl phosphate is bound by residues 219–222 and T247; that span reads HCLP.

It belongs to the aspartate/ornithine carbamoyltransferase superfamily. OTCase family.

The protein localises to the cytoplasm. It carries out the reaction carbamoyl phosphate + L-ornithine = L-citrulline + phosphate + H(+). Its pathway is amino-acid biosynthesis; L-arginine biosynthesis; L-arginine from L-ornithine and carbamoyl phosphate: step 1/3. Functionally, reversibly catalyzes the transfer of the carbamoyl group from carbamoyl phosphate (CP) to the N(epsilon) atom of ornithine (ORN) to produce L-citrulline. This is Ornithine carbamoyltransferase (argF) from Neisseria polysaccharea.